Reading from the N-terminus, the 1013-residue chain is Tolloid-like protein 1 (1013 aa).

Positions 1–30 (MGLQALSPRMLLWLVVSGIVFSRVLWVCAG) are cleaved as a signal peptide. Positions 31-147 (LDYDYTFDGN…EQSEKNRVPR (117 aa)) are excised as a propeptide. Positions 124 to 150 (QNNTMKGKAPPKLSEQSEKNRVPRAAT) are disordered. The region spanning 148–347 (AATSRTERIW…AQARKLYRCP (200 aa)) is the Peptidase M12A domain. Asn-169 carries an N-linked (GlcNAc...) asparagine glycan. Intrachain disulfides connect Cys-190–Cys-346, Cys-210–Cys-232, Cys-212–Cys-213, and Cys-349–Cys-375. His-240 contacts Zn(2+). Glu-241 is an active-site residue. His-244 and His-250 together coordinate Zn(2+). 2 CUB domains span residues 349–461 (CGET…YEAI) and 462–574 (CGGE…FFKE). Asn-359 and Asn-390 each carry an N-linked (GlcNAc...) asparagine glycan. Disulfide bonds link Cys-402-Cys-424, Cys-462-Cys-488, Cys-515-Cys-537, Cys-578-Cys-590, Cys-586-Cys-599, Cys-601-Cys-614, Cys-618-Cys-644, Cys-671-Cys-693, Cys-734-Cys-745, Cys-741-Cys-754, Cys-756-Cys-769, Cys-774-Cys-800, Cys-827-Cys-849, Cys-887-Cys-917, and Cys-944-Cys-966. Residues 574–615 (EEDECAKPDRGGCEQRCLNTLGSYQCACEPGYELGPDRRSCE) enclose the EGF-like 1; calcium-binding domain. The CUB 3 domain occupies 618 to 730 (CGGLLTKLNG…KGFKAHFFSD (113 aa)). An N-linked (GlcNAc...) asparagine glycan is attached at Asn-626. The EGF-like 2; calcium-binding domain occupies 730–770 (DKDECSKDNGGCQHECVNTMGSYTCQCRNGFVLHENKHDCK). 2 CUB domains span residues 774 to 886 (CEQK…HSTE) and 887 to 1003 (CGGR…YKSI).

Zn(2+) serves as cofactor. Highly expressed in brain and kidney and weakly in lung, skeletal muscle. A perceptible level of expression is observed in heart and testis.

The protein localises to the secreted. Functionally, protease which processes procollagen C-propeptides, such as chordin, pro-biglycan and pro-lysyl oxidase. Required for the embryonic development, especially heart development. Predominant protease, which in the development, influences dorsal-ventral patterning and skeletogenesis. The sequence is that of Tolloid-like protein 1 (Tll1) from Mus musculus (Mouse).